The sequence spans 414 residues: Esterase FrsA (414 aa).

It belongs to the FrsA family.

It carries out the reaction a carboxylic ester + H2O = an alcohol + a carboxylate + H(+). Catalyzes the hydrolysis of esters. This Escherichia coli O6:K15:H31 (strain 536 / UPEC) protein is Esterase FrsA.